A 244-amino-acid chain; its full sequence is U11/U12 small nuclear ribonucleoprotein 35 kDa protein (244 aa).

Residues 51-129 (LTLFVARLNS…HEIFVDYELE (79 aa)) form the RRM domain. The span at 146 to 162 (GKKESGQLRFGGRDRPF) shows a compositional bias: basic and acidic residues. The disordered stretch occupies residues 146–244 (GKKESGQLRF…KTRDKRDRSK (99 aa)). K172 participates in a covalent cross-link: Glycyl lysine isopeptide (Lys-Gly) (interchain with G-Cter in SUMO2). 2 stretches are compositionally biased toward basic and acidic residues: residues 173 to 185 (NEPH…ERRE) and 192 to 244 (RHWD…DRSK).

Component of the U11/U12 snRNPs that are part of the U12-type spliceosome.

It is found in the nucleus. This is U11/U12 small nuclear ribonucleoprotein 35 kDa protein (Snrnp35) from Rattus norvegicus (Rat).